The chain runs to 389 residues: MKFVDEAVIKVQAGDGGSGCVSFRREKYIPDGGPDGGDGGDGGSVYLVADASLNTLIDYRFERFYLAERGENGRGRDCTGKGGSDLTLRVPVGTRAVDIDTDEVLGDLTEVGQKLLVAKGGFHGLGNTRFKSSVNRAPRQKTLGTKGEVRELRLELLLLADVGLLGMPNAGKSTFIRAVSRATPKVADYPFTTLVPNLGVVNPRPGQSFVIADIPGLIEGAAEGAGLGIRFLKHLERCRVLLHILDIEPIDGSSPAESARAIVAELEKYSPELAAKPRWLVFNKTDLLLEEELQERVDAIVAELGWEGDVYTMSAATREGTKELAEKLFDFIKSLPDEAAAADPDKEVEFKWDNYHKAQLDDLNPDFDDSDDDDDFDDDDYDVEVIYQR.

Positions 1–159 (MKFVDEAVIK…RELRLELLLL (159 aa)) constitute an Obg domain. Positions 160–333 (ADVGLLGMPN…LAEKLFDFIK (174 aa)) constitute an OBG-type G domain. GTP-binding positions include 166 to 173 (GMPNAGKS), 191 to 195 (FTTLV), 213 to 216 (DIPG), 283 to 286 (NKTD), and 314 to 316 (SAA). Residues serine 173 and threonine 193 each coordinate Mg(2+).

It belongs to the TRAFAC class OBG-HflX-like GTPase superfamily. OBG GTPase family. In terms of assembly, monomer. It depends on Mg(2+) as a cofactor.

Its subcellular location is the cytoplasm. In terms of biological role, an essential GTPase which binds GTP, GDP and possibly (p)ppGpp with moderate affinity, with high nucleotide exchange rates and a fairly low GTP hydrolysis rate. Plays a role in control of the cell cycle, stress response, ribosome biogenesis and in those bacteria that undergo differentiation, in morphogenesis control. In Shewanella amazonensis (strain ATCC BAA-1098 / SB2B), this protein is GTPase Obg.